We begin with the raw amino-acid sequence, 811 residues long: Ribonucleoside-diphosphate reductase large chain (811 aa).

Residues Met1–Lys92 enclose the ATP-cone domain. Residues Lys5–Arg6, Glu11–Lys17, Thr53, and Asp57 contribute to the ATP site. GDP contacts are provided by Ser202 and Ser217. Cys218 and Cys444 are oxidised to a cystine. Residues Asp226 to Ile228, Lys243, Arg256, and Ala263 to Gly264 each bind dTTP. Residue Asn427 coordinates GDP. The active-site Proton acceptor is Asn427. Cys429 functions as the Cysteine radical intermediate in the catalytic mechanism. GDP is bound by residues Glu431 and Thr603–Thr606. The Proton acceptor role is filled by Glu431.

Belongs to the ribonucleoside diphosphate reductase large chain family. In terms of assembly, heterodimer of a large and a small subunit. Interacts with SPD1.

The enzyme catalyses a 2'-deoxyribonucleoside 5'-diphosphate + [thioredoxin]-disulfide + H2O = a ribonucleoside 5'-diphosphate + [thioredoxin]-dithiol. Under complex allosteric control mediated by deoxynucleoside triphosphates and ATP binding to separate specificity and activation sites on the large subunit. The type of nucleotide bound at the specificity site determines substrate preference. It seems probable that ATP makes the enzyme reduce CDP and UDP, dGTP favors ADP reduction and dTTP favors GDP reduction. Stimulated by ATP and inhibited by dATP binding to the activity site. Its function is as follows. Provides the precursors necessary for DNA synthesis. Catalyzes the biosynthesis of deoxyribonucleotides from the corresponding ribonucleotides. This is Ribonucleoside-diphosphate reductase large chain (cdc22) from Schizosaccharomyces pombe (strain 972 / ATCC 24843) (Fission yeast).